The sequence spans 201 residues: Small ribosomal subunit protein uS4 (201 aa).

The segment at 1–38 (MARYTGPATRKSRRLGVDLVGGDQSFEKRPYPPGQHGR) is disordered. The S4 RNA-binding domain maps to 91–157 (SRLDNVVYRA…DPFVIARETA (67 aa)).

It belongs to the universal ribosomal protein uS4 family. As to quaternary structure, part of the 30S ribosomal subunit. Contacts protein S5. The interaction surface between S4 and S5 is involved in control of translational fidelity.

Its function is as follows. One of the primary rRNA binding proteins, it binds directly to 16S rRNA where it nucleates assembly of the body of the 30S subunit. With S5 and S12 plays an important role in translational accuracy. The polypeptide is Small ribosomal subunit protein uS4 (Mycobacterium sp. (strain JLS)).